We begin with the raw amino-acid sequence, 154 residues long: MAARLCCQLDPSRDVLCLRPVGAESRGRPLSGPLGTLSSPSPSAVPADHGAHLSLRGLPVCAFSSAGPCALRFTSARCMETTVNAHQSLPKVLHKRTLGLPAMSTTDLEAYFKDCVFKDWEELGEEIRLMIFVLGGCRHKLVCAPAPCNFFTSA.

Residues 68-117 form a mitochondrial targeting sequence region; that stretch reads PCALRFTSARCMETTVNAHQSLPKVLHKRTLGLPAMSTTDLEAYFKDCVF.

The protein belongs to the orthohepadnavirus protein X family. As to quaternary structure, may form homodimer. May interact with host CEBPA, CFLAR, CREB1, DDB1, E4F1, HBXIP, HSPD1/HSP60, NFKBIA, POLR2E and SMAD4. Interacts with host SMC5-SMC6 complex and induces its degradation. Interacts with host TRPC4AP; leading to prevent ubiquitination of TRPC4AP. Interacts with host PLSCR1; this interaction promotes ubiquitination and degradation of HBx and impairs HBx-mediated cell proliferation. A fraction may be phosphorylated in insect cells and HepG2 cells, a human hepatoblastoma cell line. Phosphorylated in vitro by host protein kinase C or mitogen-activated protein kinase. N-acetylated in insect cells.

The protein resides in the host cytoplasm. Its subcellular location is the host nucleus. The protein localises to the host mitochondrion. Its function is as follows. Multifunctional protein that plays a role in silencing host antiviral defenses and promoting viral transcription. Does not seem to be essential for HBV infection. May be directly involved in development of cirrhosis and liver cancer (hepatocellular carcinoma). Most of cytosolic activities involve modulation of cytosolic calcium. The effect on apoptosis is controversial depending on the cell types in which the studies have been conducted. May induce apoptosis by localizing in mitochondria and causing loss of mitochondrial membrane potential. May also modulate apoptosis by binding host CFLAR, a key regulator of the death-inducing signaling complex (DISC). Promotes viral transcription by using the host E3 ubiquitin ligase DDB1 to target the SMC5-SMC6 complex to proteasomal degradation. This host complex would otherwise bind to viral episomal DNA, and prevents its transcription. Moderately stimulates transcription of many different viral and cellular transcription elements. Promoters and enhancers stimulated by HBx contain DNA binding sites for NF-kappa-B, AP-1, AP-2, c-EBP, ATF/CREB, or the calcium-activated factor NF-AT. The protein is Protein X of Homo sapiens (Human).